The primary structure comprises 242 residues: 2-amino-5-formylamino-6-ribosylaminopyrimidin-4(3H)-one 5'-monophosphate deformylase (242 aa).

Fe cation is bound by residues E46, H48, D57, and H125.

It belongs to the creatininase superfamily. FAPy deformylase family. Homodimer. It depends on Fe(2+) as a cofactor. Zn(2+) serves as cofactor.

It catalyses the reaction 2-amino-5-formylamino-6-(5-phospho-D-ribosylamino)pyrimidin-4(3H)-one + H2O = 2,5-diamino-6-(1-D-ribosylamino)pyrimidin-4(3H)-one 5'-phosphate + formate + H(+). The protein operates within cofactor biosynthesis; coenzyme F420 biosynthesis. It participates in cofactor biosynthesis; riboflavin biosynthesis. Catalyzes the hydrolysis of the formamide of 2-amino-5-formylamino-6-ribosylamino-4(3H)-pyrimidinone 5'-monophosphate (FAPy) to form 2,5-diamino-6-ribosylamino-4(3H)-pyrimidinone 5'-phosphate (APy). This Methanococcus aeolicus (strain ATCC BAA-1280 / DSM 17508 / OCM 812 / Nankai-3) protein is 2-amino-5-formylamino-6-ribosylaminopyrimidin-4(3H)-one 5'-monophosphate deformylase.